Reading from the N-terminus, the 199-residue chain is Probable chemoreceptor glutamine deamidase CheD (199 aa).

It belongs to the CheD family.

It carries out the reaction L-glutaminyl-[protein] + H2O = L-glutamyl-[protein] + NH4(+). Functionally, probably deamidates glutamine residues to glutamate on methyl-accepting chemotaxis receptors (MCPs), playing an important role in chemotaxis. The sequence is that of Probable chemoreceptor glutamine deamidase CheD from Cereibacter sphaeroides (strain ATCC 17023 / DSM 158 / JCM 6121 / CCUG 31486 / LMG 2827 / NBRC 12203 / NCIMB 8253 / ATH 2.4.1.) (Rhodobacter sphaeroides).